We begin with the raw amino-acid sequence, 543 residues long: Phosphoribosylaminoimidazole carboxylase (543 aa).

The ATP-grasp domain occupies 110-297; it reads KEHLIKNGIA…QFEAHVRAIT (188 aa). ATP is bound at residue 137–192; sequence GAKYGFPYMLKSRTMAYDGRGNFVVKDKSYIPEALKVLDDRPLYAEKWAPFSKELA.

The protein in the C-terminal section; belongs to the AIR carboxylase family. Class I subfamily.

It carries out the reaction 5-amino-1-(5-phospho-D-ribosyl)imidazole-4-carboxylate + H(+) = 5-amino-1-(5-phospho-beta-D-ribosyl)imidazole + CO2. Its pathway is purine metabolism; IMP biosynthesis via de novo pathway; 5-amino-1-(5-phospho-D-ribosyl)imidazole-4-carboxylate from 5-amino-1-(5-phospho-D-ribosyl)imidazole (carboxylase route): step 1/1. The sequence is that of Phosphoribosylaminoimidazole carboxylase (ADE1) from Ogataea methanolica (Yeast).